A 358-amino-acid polypeptide reads, in one-letter code: Neutral protease 2 homolog MEP8 (358 aa).

The N-terminal stretch at 1-19 is a signal peptide; that stretch reads MKLSSILLALAALVSPAFS. The propeptide occupies 20 to 179; sequence YAISHLPRSE…EKAIKPVDKR (160 aa). Intrachain disulfides connect Cys-186–Cys-256 and Cys-263–Cys-281. Residue His-305 coordinates Zn(2+). Residue Glu-306 is part of the active site. Zn(2+) contacts are provided by His-309 and Asp-320.

It belongs to the peptidase M35 family. The cofactor is Zn(2+).

It is found in the secreted. The enzyme catalyses Preferential cleavage of bonds with hydrophobic residues in P1'. Also 3-Asn-|-Gln-4 and 8-Gly-|-Ser-9 bonds in insulin B chain.. Secreted metalloproteinase that allows assimilation of proteinaceous substrates. Shows high activities on basic nuclear substrates such as histone and protamine. May be involved in virulence. This Coccidioides posadasii (strain C735) (Valley fever fungus) protein is Neutral protease 2 homolog MEP8 (MEP8).